A 218-amino-acid polypeptide reads, in one-letter code: Hypoxanthine-guanine phosphoribosyltransferase (218 aa).

Position 69 (Lys69) interacts with GMP. Position 103 is an N6-acetyllysine (Lys103). Residue Lys115 forms a Glycyl lysine isopeptide (Lys-Gly) (interchain with G-Cter in SUMO1); alternate linkage. Residue Lys115 forms a Glycyl lysine isopeptide (Lys-Gly) (interchain with G-Cter in SUMO2); alternate linkage. GMP contacts are provided by residues 134–142 (EDIIDTGKT), Lys166, 186–188 (KFV), and Asp194. The active-site Proton acceptor is the Asp138. Thr142 carries the post-translational modification Phosphothreonine. Asp194 contacts Mg(2+).

It belongs to the purine/pyrimidine phosphoribosyltransferase family. In terms of assembly, homotetramer. Mg(2+) is required as a cofactor.

It is found in the cytoplasm. The catalysed reaction is IMP + diphosphate = hypoxanthine + 5-phospho-alpha-D-ribose 1-diphosphate. The enzyme catalyses GMP + diphosphate = guanine + 5-phospho-alpha-D-ribose 1-diphosphate. Its pathway is purine metabolism; IMP biosynthesis via salvage pathway; IMP from hypoxanthine: step 1/1. In terms of biological role, converts guanine to guanosine monophosphate, and hypoxanthine to inosine monophosphate. Transfers the 5-phosphoribosyl group from 5-phosphoribosylpyrophosphate onto the purine. Plays a central role in the generation of purine nucleotides through the purine salvage pathway. This Mus musculus (Mouse) protein is Hypoxanthine-guanine phosphoribosyltransferase (Hprt1).